The primary structure comprises 58 residues: MLFENLNNFSLKNNKNINQNIKMSCIKNEKYNDLRICMMVHPVAPVKTQRFVRVEYYP.

This is an uncharacterized protein from Dictyostelium discoideum (Social amoeba).